The following is a 501-amino-acid chain: UPF0288 protein Maeo_0995 (501 aa).

It belongs to the UPF0288 family.

This is UPF0288 protein Maeo_0995 from Methanococcus aeolicus (strain ATCC BAA-1280 / DSM 17508 / OCM 812 / Nankai-3).